The sequence spans 541 residues: DNA polymerase epsilon subunit B (541 aa).

It belongs to the DNA polymerase epsilon subunit B family. In terms of assembly, heterotetramer. Consists of four subunits: POL2, DPB2, DPB3 and DPB4.

It is found in the nucleus. As accessory component of the DNA polymerase epsilon (DNA polymerase II) participates in chromosomal DNA replication. The sequence is that of DNA polymerase epsilon subunit B (DPB2) from Cryptococcus neoformans var. neoformans serotype D (strain B-3501A) (Filobasidiella neoformans).